We begin with the raw amino-acid sequence, 1039 residues long: DIS3-like exonuclease 1 (1039 aa).

Residues 221–309 (PEHLPLEILE…KGRNGALCEN (89 aa)) form the CSD1 domain. The CSD2 domain maps to 359-425 (VLVMPWDYRI…AEIATILVEN (67 aa)). The RNB domain occupies 458-807 (RLDLRKTHLV…VHRLLLAAVN (350 aa)).

The protein belongs to the RNR ribonuclease family. In terms of assembly, component of the RNA exosome complex. Mg(2+) is required as a cofactor.

It localises to the cytoplasm. It carries out the reaction Exonucleolytic cleavage in the 3'- to 5'-direction to yield nucleoside 5'-phosphates.. Its function is as follows. Catalytic component of the RNA exosome complex which has 3'-&gt;5' exoribonuclease activity and participates in a multitude of cellular RNA processing and degradation events. In Xenopus tropicalis (Western clawed frog), this protein is DIS3-like exonuclease 1 (dis3l).